The primary structure comprises 134 residues: MENWTNEIWVAIGIAFIVGLFIGYIIVRLTKGSVKHQAKTEAELKTVKTQLDTQKAQIEKHFAESAELFKTLINDYQKLYRHYATSSNNLLGEKDQKGLFTQQLITATDKSQNEQPRDYSEGASGLFKENKEEN.

A helical transmembrane segment spans residues 7 to 27 (EIWVAIGIAFIVGLFIGYIIV). Positions 107-134 (ATDKSQNEQPRDYSEGASGLFKENKEEN) are disordered. The span at 111 to 120 (SQNEQPRDYS) shows a compositional bias: basic and acidic residues.

Belongs to the ZapG family.

The protein resides in the cell inner membrane. Functionally, involved in cell division, cell envelope biogenesis and cell shape maintenance. This Haemophilus influenzae (strain ATCC 51907 / DSM 11121 / KW20 / Rd) protein is Z-ring associated protein G.